The chain runs to 327 residues: Serpentine receptor class gamma-2 (327 aa).

6 consecutive transmembrane segments (helical) span residues 35-55, 70-90, 157-177, 181-203, 244-264, and 277-297; these read LVQF…LYIL, ILFI…IFFA, MKYA…NIII, LPVY…ATMT, IASF…SLFA, and FLLP…MVMA.

It belongs to the nematode receptor-like protein srg family.

Its subcellular location is the membrane. The sequence is that of Serpentine receptor class gamma-2 (srg-2) from Caenorhabditis elegans.